The following is a 553-amino-acid chain: Glycerol kinase 3 (553 aa).

Threonine 20 lines the substrate pocket. ATP is bound at residue arginine 24. Residues arginine 94, tyrosine 148, and aspartate 259 each contribute to the substrate site. ATP-binding positions include threonine 281, glycine 326, and 427–431 (GMTSN).

This sequence belongs to the FGGY kinase family.

The protein localises to the mitochondrion outer membrane. The protein resides in the cytoplasm. It carries out the reaction glycerol + ATP = sn-glycerol 3-phosphate + ADP + H(+). It participates in polyol metabolism; glycerol degradation via glycerol kinase pathway; sn-glycerol 3-phosphate from glycerol: step 1/1. Functionally, may be involved in the regulation of glycerol uptake and metabolism. The polypeptide is Glycerol kinase 3 (Homo sapiens (Human)).